Consider the following 505-residue polypeptide: Cytochrome P450 71A2 (505 aa).

The chain crosses the membrane as a helical span at residues 7 to 27 (WYSLLIPLFVFIFLLIHHCFF). Position 448 (C448) interacts with heme.

Belongs to the cytochrome P450 family. It depends on heme as a cofactor.

It localises to the membrane. May have a role in maturation, such as during flavor formation or other metabolite production specific to aging tissues. The sequence is that of Cytochrome P450 71A2 (CYP71A2) from Solanum melongena (Eggplant).